We begin with the raw amino-acid sequence, 487 residues long: Glutamyl-tRNA(Gln) amidotransferase subunit A (487 aa).

Residues K79 and S158 each act as charge relay system in the active site. S182 functions as the Acyl-ester intermediate in the catalytic mechanism.

This sequence belongs to the amidase family. GatA subfamily. Heterotrimer of A, B and C subunits.

The enzyme catalyses L-glutamyl-tRNA(Gln) + L-glutamine + ATP + H2O = L-glutaminyl-tRNA(Gln) + L-glutamate + ADP + phosphate + H(+). Functionally, allows the formation of correctly charged Gln-tRNA(Gln) through the transamidation of misacylated Glu-tRNA(Gln) in organisms which lack glutaminyl-tRNA synthetase. The reaction takes place in the presence of glutamine and ATP through an activated gamma-phospho-Glu-tRNA(Gln). This is Glutamyl-tRNA(Gln) amidotransferase subunit A from Ehrlichia chaffeensis (strain ATCC CRL-10679 / Arkansas).